Here is a 118-residue protein sequence, read N- to C-terminus: Deoxynogalonate monooxygenase (118 aa).

The ABM domain maps to 14–100 (VTFVNRFTVH…ALSTSEHGLF (87 aa)).

Homodimer.

The enzyme catalyses deoxynogalonate + O2 = nogalonate + H2O + H(+). Its pathway is antibiotic biosynthesis. Its function is as follows. Involved in the biosynthesis of the anthracycline (aromatic polyketide) antibiotic nogalamycin. Catalyzes the oxygenation of 12-deoxy-nogalonic acid at position 12 to yield nogalonic acid. The sequence is that of Deoxynogalonate monooxygenase from Streptomyces nogalater.